The sequence spans 343 residues: Mas-related G-protein coupled receptor member F (343 aa).

The Extracellular segment spans residues 1 to 44; that stretch reads MAGNCSWEAHPGNRNKMCPGLSEAPELYSRGFLTIEQIAMLPPP. A glycan (N-linked (GlcNAc...) asparagine) is linked at asparagine 4. Residues 45–66 form a helical membrane-spanning segment; sequence AVMNYIFLLLCLCGLVGNGLVL. Residues 67 to 82 are Cytoplasmic-facing; the sequence is WFFGFSIKRNPFSIYF. A helical transmembrane segment spans residues 83 to 104; sequence LHLASADVGYLFSKAVFSILNT. Residues 105–123 lie on the Extracellular side of the membrane; it reads GGFLGTFADYIRSVCRVLG. Residues 124 to 144 form a helical membrane-spanning segment; the sequence is LCMFLTGVSLLPAVSAERCAS. Residues 145–160 are Cytoplasmic-facing; sequence VIFPAWYWRRRPKRLS. Residues 161 to 181 traverse the membrane as a helical segment; sequence AVVCALLWVLSLLVTCLHNYF. The Extracellular portion of the chain corresponds to 182-198; the sequence is CVFLGRGAPGAACRHMD. A helical membrane pass occupies residues 199 to 220; sequence IFLGILLFLLCCPLMVLPCLAL. Topologically, residues 221–241 are cytoplasmic; it reads ILHVECRARRRQRSAKLNHVI. Residues 242 to 263 form a helical membrane-spanning segment; the sequence is LAMVSVFLVSSIYLGIDWFLFW. Topologically, residues 264–273 are extracellular; it reads VFQIPAPFPE. Residues 274–294 traverse the membrane as a helical segment; it reads YVTDLCICINSSAKPIVYFLA. The Cytoplasmic portion of the chain corresponds to 295 to 343; it reads GRDKSQRLWEPLRVVFQRALRDGAELGEAGGSTPNTVTMEMQCPPGNAS. Residues 320–343 form a disordered region; that stretch reads LGEAGGSTPNTVTMEMQCPPGNAS.

The protein belongs to the G-protein coupled receptor 1 family. Mas subfamily.

The protein localises to the cell membrane. Orphan receptor. May bind to a neuropeptide and may regulate nociceptor function and/or development, including the sensation or modulation of pain. The polypeptide is Mas-related G-protein coupled receptor member F (MRGPRF) (Homo sapiens (Human)).